Consider the following 194-residue polypeptide: tRNA (pseudouridine(54)-N(1))-methyltransferase (194 aa).

An S-adenosyl-L-methionine-binding site is contributed by leucine 125.

It belongs to the methyltransferase superfamily. TrmY family. Homodimer.

It localises to the cytoplasm. The enzyme catalyses pseudouridine(54) in tRNA + S-adenosyl-L-methionine = N(1)-methylpseudouridine(54) in tRNA + S-adenosyl-L-homocysteine + H(+). Its function is as follows. Specifically catalyzes the N1-methylation of pseudouridine at position 54 (Psi54) in tRNAs. This is tRNA (pseudouridine(54)-N(1))-methyltransferase from Methanospirillum hungatei JF-1 (strain ATCC 27890 / DSM 864 / NBRC 100397 / JF-1).